The sequence spans 138 residues: Large ribosomal subunit protein uL16 (138 aa).

Residues 1–19 (MLSPKRTKYRKAHKGRIHG) show a composition bias toward basic residues. Residues 1 to 21 (MLSPKRTKYRKAHKGRIHGNA) are disordered.

The protein belongs to the universal ribosomal protein uL16 family. As to quaternary structure, part of the 50S ribosomal subunit.

In terms of biological role, binds 23S rRNA and is also seen to make contacts with the A and possibly P site tRNAs. In Granulibacter bethesdensis (strain ATCC BAA-1260 / CGDNIH1), this protein is Large ribosomal subunit protein uL16.